We begin with the raw amino-acid sequence, 1118 residues long: Repetin (1118 aa).

The tract at residues 1-91 is S-100-like; sequence MPQLLNSILN…VQACHHKLDS (91 aa). EF-hand domains are found at residues 13 to 48 and 49 to 84; these read KVFQ…LRRP and NDPE…LVQA. Ca(2+) contacts are provided by Ser27, Glu32, Asp62, Asp64, Asn66, Tyr68, and Glu73. The interval 94–1118 is disordered; that stretch reads YGSRTSSQKE…YVQEQAAYQY (1025 aa). The span at 100 to 115 shows a compositional bias: basic and acidic residues; it reads SQKEHDQEGTRSHKFS. Residues 138–148 show a composition bias toward polar residues; the sequence is SEGQHQNVQHD. Composition is skewed to basic and acidic residues over residues 149–164 and 172–186; these read QSQR…DTDP and FHGD…RQDT. The span at 237–252 shows a compositional bias: low complexity; sequence GQSKTSGQQSSHGQSG. Residues 259 to 299 are compositionally biased toward polar residues; sequence YSSQTSQQESDSYEQYGSQHQKSGNSQTERQGQNSQYGQTN. 48 tandem repeats follow at residues 273–284, 285–296, 297–308, 309–320, 321–332, 333–344, 345–356, 357–368, 369–380, 381–392, 393–404, 405–416, 417–428, 429–440, 441–452, 453–464, 465–476, 477–488, 489–500, 501–512, 513–524, 525–536, 537–548, 549–560, 561–572, 573–584, 585–596, 597–608, 609–620, 621–632, 633–644, 645–656, 657–668, 669–680, 681–692, 693–704, 705–716, 717–728, 729–740, 741–752, 753–764, 765–776, 777–788, 789–800, 801–812, 813–824, 825–836, and 837–848. The segment at 273–848 is 48 X 12 AA approximate tandem repeats of Q-[KT]-[GD]-[RS]-Q-[DG]-Q-S-[PS]-H-X-G; the sequence is QYGSQHQKSG…DRQSQSSHCG (576 aa). The interval 321–764 is 22 X 12 AA approximate tandem repeats of Q-K-G-R-Q-D-Q-S-P-H-Q-G; sequence QKGRKDQSFQ…GRQDQSSHQG (444 aa). Composition is skewed to basic and acidic residues over residues 347-363 and 371-387; these read GRQD…RQDQ. Residues 434–466 show a composition bias toward polar residues; the sequence is DQSSHQGQKGRQDQSSHQGQKGRQDQSSHQGQK. The span at 467–481 shows a compositional bias: basic and acidic residues; that stretch reads GRQDQSSHQGQREGQ. Polar residues-rich tracts occupy residues 482–535 and 543–570; these read DQNS…SFHY and LSSH…QSFH. Polar residues-rich tracts occupy residues 587–606 and 616–643; these read DRQS…QSFH and GSHQ…SSQQ. Over residues 710–726 the composition is skewed to polar residues; it reads DLSSHQGQKGRQDQSPH. 2 stretches are compositionally biased toward basic and acidic residues: residues 731–747 and 755–769; these read GRHD…RQDQ and GRQD…REGQ. Composition is skewed to polar residues over residues 795–822, 833–848, and 855–864; these read LSSH…QSFH, SHHG…SHCG, and TENQGQNRHS. Positions 865–875 are enriched in basic and acidic residues; sequence LGTDRTRRDSY. The segment covering 876 to 889 has biased composition (polar residues); that stretch reads VEQSGRSVKLSQQN. Basic and acidic residues-rich tracts occupy residues 890 to 908, 947 to 965, 978 to 998, 1005 to 1045, and 1056 to 1065; these read SREE…RREQ, EQDH…HSVE, THEE…DEQN, QTHE…KEKY, and PNREKSHMSE.

This sequence belongs to the S100-fused protein family. Post-translationally, potential substrate of transglutaminase. Some arginines are probably converted to citrullines by peptidylarginine deimidase. Detectable in the stratified internal epithelia of forestomach and tongue and to a lesser degree in normal skin epidermis, where it is restricted to the differentiated suprabasal cell layers. Overexpressed in skin tumors.

The protein localises to the secreted. The protein resides in the extracellular space. It is found in the extracellular matrix. In terms of biological role, involved in the cornified cell envelope formation. Multifunctional epidermal matrix protein. In Mus musculus (Mouse), this protein is Repetin (Rptn).